We begin with the raw amino-acid sequence, 430 residues long: Adenylosuccinate synthetase (430 aa).

GTP-binding positions include 12 to 18 (GDEGKGK) and 40 to 42 (GHT). The active-site Proton acceptor is the Asp13. Mg(2+) is bound by residues Asp13 and Gly40. Residues 13–16 (DEGK), 38–41 (NAGH), Thr128, Arg142, Gln223, Thr238, and Arg302 each bind IMP. The active-site Proton donor is His41. 298–304 (TTTGRPR) provides a ligand contact to substrate. GTP is bound by residues Arg304, 330 to 332 (SID), and 412 to 414 (SVG).

This sequence belongs to the adenylosuccinate synthetase family. Homodimer. It depends on Mg(2+) as a cofactor.

The protein localises to the cytoplasm. It catalyses the reaction IMP + L-aspartate + GTP = N(6)-(1,2-dicarboxyethyl)-AMP + GDP + phosphate + 2 H(+). It participates in purine metabolism; AMP biosynthesis via de novo pathway; AMP from IMP: step 1/2. In terms of biological role, plays an important role in the de novo pathway of purine nucleotide biosynthesis. Catalyzes the first committed step in the biosynthesis of AMP from IMP. The sequence is that of Adenylosuccinate synthetase from Enterococcus faecalis (strain ATCC 700802 / V583).